Reading from the N-terminus, the 153-residue chain is UPF0756 membrane protein Pjdr2_2290 (153 aa).

The next 5 membrane-spanning stretches (helical) occupy residues 6 to 26 (LILV…IATA), 50 to 70 (LELG…SGKV), 75 to 95 (LIAA…AVAA), 111 to 131 (MVVG…GIPV), and 132 to 152 (GPLM…LMSG).

Belongs to the UPF0756 family.

It localises to the cell membrane. This chain is UPF0756 membrane protein Pjdr2_2290, found in Paenibacillus sp. (strain JDR-2).